The primary structure comprises 256 residues: Nuclear shuttle protein (256 aa).

Residues 1–53 (MYPSRNKRGSYFNQRRQYSRNHVWKRPTAAKRHDWKRRPSNTSKPNDEPKMSA) form a disordered region. Over residues 17–39 (QYSRNHVWKRPTAAKRHDWKRRP) the composition is skewed to basic residues. The short motif at 21-42 (NHVWKRPTAAKRHDWKRRPSNT) is the Bipartite nuclear localization signal element. The Nuclear localization signal motif lies at 81–96 (DLGRSEPNRSRSYIRL). The interval 150-187 (ELFGARIHSHGNLSVTPALKDRYYIRHVCKRVLSVEKD) is interaction with Arabidopsis thaliana NSI protein.

Belongs to the begomovirus nuclear shuttle protein family. As to quaternary structure, binds to single-stranded and double-stranded viral DNA. Interacts with the host nuclear shuttle interacting (NSI) protein. This interaction may allow NSP to recruit NSI monomers to the viral genome and thus regulate nuclear export of viral genome by NSP.

It is found in the host nucleus. The protein resides in the host cytoplasm. It localises to the host cell membrane. Functionally, binds to the genomic viral ssDNA, shuttles it into and out of the cell nucleus. Begomoviruses use 2 proteins to transport their DNA from cell to cell. The nuclear shuttle protein (NSP) shuttles it between nucleus and cytoplasm and the movement protein (MP) probably transports the DNA-NSP complex to the cell periphery and facilitates movement across the cell wall. This Abutilon mosaic virus (isolate West India) (AbMV) protein is Nuclear shuttle protein.